We begin with the raw amino-acid sequence, 145 residues long: 3-hydroxyacyl-[acyl-carrier-protein] dehydratase FabZ (145 aa).

Residue His49 is part of the active site.

The protein belongs to the thioester dehydratase family. FabZ subfamily.

It localises to the cytoplasm. It carries out the reaction a (3R)-hydroxyacyl-[ACP] = a (2E)-enoyl-[ACP] + H2O. Functionally, involved in unsaturated fatty acids biosynthesis. Catalyzes the dehydration of short chain beta-hydroxyacyl-ACPs and long chain saturated and unsaturated beta-hydroxyacyl-ACPs. The chain is 3-hydroxyacyl-[acyl-carrier-protein] dehydratase FabZ from Rickettsia conorii (strain ATCC VR-613 / Malish 7).